A 194-amino-acid chain; its full sequence is Putative manganese efflux pump MntP (194 aa).

A run of 6 helical transmembrane segments spans residues 8–28, 36–56, 61–81, 109–129, 138–158, and 172–192; these read LLAI…GIIL, MLIM…LGWL, FSHL…AFLG, MAVA…FLGI, PAGI…IFGI, and LWGG…HLFF.

Belongs to the MntP (TC 9.B.29) family.

The protein resides in the cell inner membrane. Probably functions as a manganese efflux pump. This chain is Putative manganese efflux pump MntP, found in Bacteroides fragilis (strain ATCC 25285 / DSM 2151 / CCUG 4856 / JCM 11019 / LMG 10263 / NCTC 9343 / Onslow / VPI 2553 / EN-2).